A 163-amino-acid chain; its full sequence is MLGKISLLLLPVFVAINLVHSSPEIIKNLSQNFCKAMDQCKQELNIPDSVIADLYNFWKDDYVMTDRLAGCAINCMATKLDVVDPDGNLHHGNAKEFAMKHGADASMAQQLVDIIHGCEKSAPPNDDKCMKTIDVAMCFKKEIHKLNWVPDMDVVLGEVLAEV.

The first 21 residues, 1-21 (MLGKISLLLLPVFVAINLVHS), serve as a signal peptide directing secretion. 3 disulfides stabilise this stretch: Cys-40/Cys-75, Cys-71/Cys-129, and Cys-118/Cys-138.

It belongs to the PBP/GOBP family. Antenna.

In terms of biological role, this major soluble protein in olfactory sensilla of male moths might serve to solubilize the extremely hydrophobic pheromone molecules and to transport pheromone through the aqueous lymph to receptors located on olfactory cilia. The chain is Pheromone-binding protein 1 from Antheraea pernyi (Chinese oak silk moth).